Here is a 290-residue protein sequence, read N- to C-terminus: Tubulin polyglutamylase complex subunit 1 (290 aa).

The tract at residues methionine 1–glycine 30 is disordered. Phosphoserine occurs at positions 34 and 266.

Part of the neuronal tubulin polyglutamylase complex which contains TPGS1, TPGS2, TTLL1, LRRC49 and NICN1. Interacts with PCM1, CSTPP1 and LRRC49.

It localises to the cytoplasm. Its subcellular location is the cytoskeleton. The protein resides in the cilium axoneme. It is found in the flagellum axoneme. The protein localises to the cilium basal body. It localises to the flagellum basal body. Its subcellular location is the cell projection. The protein resides in the axon. It is found in the dendrite. The protein localises to the microtubule organizing center. It localises to the centrosome. Its subcellular location is the centriolar satellite. Its function is as follows. Subunit of the tubulin polyglutamylase complex (TPGC). The complex mediates cilia and flagella polyglutamylation which is essential for their biogenesis and motility. May act in the targeting of the tubulin polyglutamylase complex. Required for the development of the spermatid flagellum. The protein is Tubulin polyglutamylase complex subunit 1 of Homo sapiens (Human).